Here is a 161-residue protein sequence, read N- to C-terminus: SsrA-binding protein (161 aa).

The protein belongs to the SmpB family.

Its subcellular location is the cytoplasm. Functionally, required for rescue of stalled ribosomes mediated by trans-translation. Binds to transfer-messenger RNA (tmRNA), required for stable association of tmRNA with ribosomes. tmRNA and SmpB together mimic tRNA shape, replacing the anticodon stem-loop with SmpB. tmRNA is encoded by the ssrA gene; the 2 termini fold to resemble tRNA(Ala) and it encodes a 'tag peptide', a short internal open reading frame. During trans-translation Ala-aminoacylated tmRNA acts like a tRNA, entering the A-site of stalled ribosomes, displacing the stalled mRNA. The ribosome then switches to translate the ORF on the tmRNA; the nascent peptide is terminated with the 'tag peptide' encoded by the tmRNA and targeted for degradation. The ribosome is freed to recommence translation, which seems to be the essential function of trans-translation. This is SsrA-binding protein from Desulforamulus reducens (strain ATCC BAA-1160 / DSM 100696 / MI-1) (Desulfotomaculum reducens).